A 195-amino-acid polypeptide reads, in one-letter code: Cytochrome c biogenesis ATP-binding export protein CcmA (195 aa).

The 195-residue stretch at 1 to 195 folds into the ABC transporter domain; that stretch reads MLSLHQLQFN…IKSAQILQLV (195 aa). 33–40 serves as a coordination point for ATP; the sequence is GANGSGKS.

Belongs to the ABC transporter superfamily. CcmA exporter (TC 3.A.1.107) family. In terms of assembly, the complex is composed of two ATP-binding proteins (CcmA) and two transmembrane proteins (CcmB).

The protein resides in the cell inner membrane. It catalyses the reaction heme b(in) + ATP + H2O = heme b(out) + ADP + phosphate + H(+). Part of the ABC transporter complex CcmAB involved in the biogenesis of c-type cytochromes; once thought to export heme, this seems not to be the case, but its exact role is uncertain. Responsible for energy coupling to the transport system. This is Cytochrome c biogenesis ATP-binding export protein CcmA from Rickettsia felis (strain ATCC VR-1525 / URRWXCal2) (Rickettsia azadi).